A 424-amino-acid polypeptide reads, in one-letter code: Serine--tRNA ligase (424 aa).

229–231 (TAE) serves as a coordination point for L-serine. Position 260 to 262 (260 to 262 (RRE)) interacts with ATP. E283 is a binding site for L-serine. 347–350 (EVSS) is a binding site for ATP. S383 provides a ligand contact to L-serine.

Belongs to the class-II aminoacyl-tRNA synthetase family. Type-1 seryl-tRNA synthetase subfamily. Homodimer. The tRNA molecule binds across the dimer.

The protein localises to the cytoplasm. The catalysed reaction is tRNA(Ser) + L-serine + ATP = L-seryl-tRNA(Ser) + AMP + diphosphate + H(+). It carries out the reaction tRNA(Sec) + L-serine + ATP = L-seryl-tRNA(Sec) + AMP + diphosphate + H(+). Its pathway is aminoacyl-tRNA biosynthesis; selenocysteinyl-tRNA(Sec) biosynthesis; L-seryl-tRNA(Sec) from L-serine and tRNA(Sec): step 1/1. Its function is as follows. Catalyzes the attachment of serine to tRNA(Ser). Is also able to aminoacylate tRNA(Sec) with serine, to form the misacylated tRNA L-seryl-tRNA(Sec), which will be further converted into selenocysteinyl-tRNA(Sec). This is Serine--tRNA ligase from Roseiflexus sp. (strain RS-1).